The sequence spans 131 residues: Thioredoxin H4-1 (131 aa).

Residues 3-129 (SCVGKERSDE…LEKKVAALAD (127 aa)) form the Thioredoxin domain. Residues cysteine 55 and cysteine 58 each act as nucleophile in the active site. The cysteines at positions 55 and 58 are disulfide-linked.

This sequence belongs to the thioredoxin family. Plant H-type subfamily.

It is found in the cytoplasm. In terms of biological role, probable thiol-disulfide oxidoreductase that may be involved in the redox regulation of a number of cytosolic enzymes. This chain is Thioredoxin H4-1, found in Oryza sativa subsp. japonica (Rice).